The sequence spans 689 residues: Outer spore wall assembly protein SHE10 (689 aa).

The N-terminal stretch at Met-1 to Leu-18 is a signal peptide. The disordered stretch occupies residues Thr-259 to Ala-308. The span at Asn-270–Ala-308 shows a compositional bias: low complexity. A coiled-coil region spans residues Asn-406–Thr-435. Residues Glu-610–Ser-626 are compositionally biased toward basic and acidic residues. The segment at Glu-610–Ile-689 is disordered. 3 stretches are compositionally biased toward polar residues: residues Thr-627 to Thr-637, Gln-655 to Ser-670, and Met-677 to Ile-689.

This sequence belongs to the SHE10 family. As to quaternary structure, component of the mitochondria-localized RNase mitochondrial RNA-processing (RNase MRP) composed of one single RNA encoded by the NME1 gene and at least 31 proteins. Absent in the nucleus-localized RNase MRP (NuMRP).

The protein resides in the mitochondrion. Involved in spore wall assembly. May be a component of the mitochondrial RNase MRP (MtMRP), a ribonucleoprotein endoribonuclease involved in the cleaving RNA transcripts to generate primers for DNA replication in mitochondria. This Zygosaccharomyces rouxii (strain ATCC 2623 / CBS 732 / NBRC 1130 / NCYC 568 / NRRL Y-229) protein is Outer spore wall assembly protein SHE10.